Here is a 493-residue protein sequence, read N- to C-terminus: Cytochrome P450 2E1 (493 aa).

298-303 (FAGTET) contributes to the substrate binding site. Cys-437 provides a ligand contact to heme.

The protein belongs to the cytochrome P450 family. As to quaternary structure, interacts with chaperones HSP70 and HSP90; this interaction is required for initial targeting to mitochondria. Heme is required as a cofactor.

Its subcellular location is the endoplasmic reticulum membrane. It is found in the microsome membrane. The protein localises to the mitochondrion inner membrane. It carries out the reaction an organic molecule + reduced [NADPH--hemoprotein reductase] + O2 = an alcohol + oxidized [NADPH--hemoprotein reductase] + H2O + H(+). The enzyme catalyses (5Z,8Z,11Z)-eicosatrienoate + reduced [NADPH--hemoprotein reductase] + O2 = 19-hydroxy-(5Z,8Z,11Z)-eicosatrienoate + oxidized [NADPH--hemoprotein reductase] + H2O + H(+). The catalysed reaction is (5Z,8Z,11Z,14Z,17Z)-eicosapentaenoate + reduced [NADPH--hemoprotein reductase] + O2 = 19-hydroxy-(5Z,8Z,11Z,14Z,17Z)-eicosapentaenoate + oxidized [NADPH--hemoprotein reductase] + H2O + H(+). It catalyses the reaction (4Z,7Z,10Z,13Z,16Z,19Z)-docosahexaenoate + reduced [NADPH--hemoprotein reductase] + O2 = 21-hydroxy-(4Z,7Z,10Z,13Z,16Z,19Z)-docosahexaenoate + oxidized [NADPH--hemoprotein reductase] + H2O + H(+). It carries out the reaction dodecanoate + reduced [NADPH--hemoprotein reductase] + O2 = 11-hydroxydodecanoate + oxidized [NADPH--hemoprotein reductase] + H2O + H(+). The enzyme catalyses tetradecanoate + reduced [NADPH--hemoprotein reductase] + O2 = 13-hydroxytetradecanoate + oxidized [NADPH--hemoprotein reductase] + H2O + H(+). The catalysed reaction is 4-nitrophenol + NADPH + O2 + H(+) = 4-nitrocatechol + NADP(+) + H2O. It participates in lipid metabolism; fatty acid metabolism. The omega-1 hydroxylase activity is stimulated by cytochrome b5. In terms of biological role, a cytochrome P450 monooxygenase involved in the metabolism of fatty acids. Mechanistically, uses molecular oxygen inserting one oxygen atom into a substrate, and reducing the second into a water molecule, with two electrons provided by NADPH via cytochrome P450 reductase (NADPH--hemoprotein reductase). Catalyzes the hydroxylation of carbon-hydrogen bonds. Hydroxylates fatty acids specifically at the omega-1 position displaying the highest catalytic activity for saturated fatty acids. May be involved in the oxidative metabolism of xenobiotics. The protein is Cytochrome P450 2E1 (CYP2E1) of Macaca mulatta (Rhesus macaque).